A 962-amino-acid polypeptide reads, in one-letter code: Phosphatidylinositol 3,4,5-trisphosphate 3-phosphatase and dual-specificity protein phosphatase daf-18 (962 aa).

A disordered region spans residues M1–Y37. The region spanning C58 to E230 is the Phosphatase tensin-type domain. C169 (phosphocysteine intermediate) is an active-site residue. Residues L234–C530 enclose the C2 tensin-type domain. Disordered regions lie at residues D382–V416 and I689–D731. Residues R392–P403 are compositionally biased toward basic and acidic residues. The segment covering T692–T704 has biased composition (low complexity). The span at K706–T720 shows a compositional bias: basic and acidic residues.

This sequence belongs to the PTEN phosphatase protein family. Interacts (via C-terminus) with vab-1 (via kinase domain); the interaction is independent of vab-1 kinase activity. Interacts with arr-1 and mpz-1; the interaction may inhibit daf-18. Interacts (via C-terminus) with daf-2 (via kinase domain). In terms of processing, phosphorylated by vab-1 on tyrosine residues which may promote daf-18 degradation. In terms of tissue distribution, expressed in embryo, larvae and in adult germline (at protein level). Expressed at equal levels in the 6 vulva precursor cells (VPCs) of L2 larvae and in the descendant cells of the induced VPCs (at protein level). Expressed in the uterus (at protein level). Expressed in the Z2/Z3 germline precursors, oocytes, several amphid neurons and weakly in the nerve cord (at protein level).

Its subcellular location is the perikaryon. It is found in the cell membrane. The protein resides in the cell projection. The protein localises to the axon. It localises to the dendrite. Its subcellular location is the cytoplasm. It is found in the nucleus. The enzyme catalyses a 1,2-diacyl-sn-glycero-3-phospho-(1D-myo-inositol-3,4,5-trisphosphate) + H2O = a 1,2-diacyl-sn-glycero-3-phospho-(1D-myo-inositol-4,5-bisphosphate) + phosphate. It carries out the reaction O-phospho-L-seryl-[protein] + H2O = L-seryl-[protein] + phosphate. The catalysed reaction is O-phospho-L-threonyl-[protein] + H2O = L-threonyl-[protein] + phosphate. It catalyses the reaction O-phospho-L-tyrosyl-[protein] + H2O = L-tyrosyl-[protein] + phosphate. The enzyme catalyses 1,2-dioctanoyl-sn-glycero-3-phospho-(1D-myo-inositol-3,4,5-trisphosphate) + H2O = 1,2-dioctanoyl-sn-glycero-3-phospho-(1D-myo-inositol-4,5-bisphosphate) + phosphate. It carries out the reaction 1,2-dihexadecanoyl-sn-glycero-3-phospho-(1D-myo-inositol-3,4,5-trisphosphate) + H2O = 1,2-dihexadecanoyl-sn-glycero-3-phospho-(1D-myo-inositol-4,5-bisphosphate) + phosphate. Acts as a dual-specificity protein phosphatase, dephosphorylating tyrosine-, serine- and threonine-phosphorylated proteins. Also acts as a lipid phosphatase, removing the phosphate in the D3 position of the inositol ring from phosphatidylinositol 3,4,5-trisphosphate. By dephosphorylating PtdIns(3,4,5)P3 antagonizes PtdIns(3,4,5)P3 production by age-1/PI3K and thus, negatively regulates daf-2-mediated processes including dauer formation, longevity, fat metabolism, chemotaxis towards salt, thermotolerance and axon guidance. Similarly, promotes apoptosis during embryonic development by suppressing the recruitment of the prosurvival kinases akt-1/2 to the plasma membrane. In addition, regulates Z2/Z3 germline precursor cell cycle by maintaining them arrested at the G2 stage and by controlling their growth during L1 diapause. After sperm depletion in larvae and adult hermaphrodites, promotes germline stem cell quiescence and oocyte accumulation. By dephosphorylating ephrin-like receptor vab-1 on tyrosine residues, negatively regulates oocyte maturation downstream of vab-1 and upstream of mpk-1, independently of daf-2. Plays a role in postembryonic muscle arm extensions. Required for neurite outgrowth during AIY interneuron embryonic development. Mainly independently of daf-2, negatively regulates vulva induction probably by inhibiting mpk-1 phosphorylation. Both lipid and protein phosphatase activities are required for the regulation of vulva induction. Plays a role in gonad and germline development following the L1 diapause. The polypeptide is Phosphatidylinositol 3,4,5-trisphosphate 3-phosphatase and dual-specificity protein phosphatase daf-18 (Caenorhabditis elegans).